We begin with the raw amino-acid sequence, 296 residues long: Fructose-bisphosphate aldolase class 1 (296 aa).

Glutamate 175 (proton acceptor) is an active-site residue. Residue lysine 212 is the Schiff-base intermediate with dihydroxyacetone-P of the active site.

It belongs to the class I fructose-bisphosphate aldolase family.

It carries out the reaction beta-D-fructose 1,6-bisphosphate = D-glyceraldehyde 3-phosphate + dihydroxyacetone phosphate. It functions in the pathway carbohydrate degradation; glycolysis; D-glyceraldehyde 3-phosphate and glycerone phosphate from D-glucose: step 4/4. The chain is Fructose-bisphosphate aldolase class 1 from Staphylococcus haemolyticus (strain JCSC1435).